A 955-amino-acid polypeptide reads, in one-letter code: Disintegrin and metalloproteinase domain-containing protein 19 (955 aa).

A signal peptide spans 1–25; the sequence is MPGGAGAARLCLLAFALQPLRPRAA. The propeptide occupies 26–202; sequence REPGWTRGSE…QTKKRPRRMK (177 aa). Residues 130 to 137 carry the Cysteine switch motif; sequence STCRGIRG. Cys-132 lines the Zn(2+) pocket. A glycan (N-linked (GlcNAc...) asparagine) is linked at Asn-144. At 203–699 the chain is on the extracellular side; that stretch reads REDLNSMKYV…IDSGPMPPES (497 aa). In terms of domain architecture, Peptidase M12B spans 210 to 408; that stretch reads KYVELYLVAD…GGGMCLSNMP (199 aa). Cystine bridges form between Cys-320-Cys-403, Cys-360-Cys-387, and Cys-361-Cys-370. A Zn(2+)-binding site is contributed by His-345. Residue Glu-346 is part of the active site. Positions 349 and 355 each coordinate Zn(2+). The 87-residue stretch at 416-502 folds into the Disintegrin domain; the sequence is GRRCGNGYLE…HCPTNFYQMD (87 aa). 2 N-linked (GlcNAc...) asparagine glycosylation sites follow: Asn-444 and Asn-447. The cysteines at positions 474 and 494 are disulfide-linked. An N-linked (GlcNAc...) asparagine glycan is attached at Asn-645. In terms of domain architecture, EGF-like spans 650–682; that stretch reads ETEGCGKKCNGHGVCNNNQNCHCLPGWAPPFCN. Intrachain disulfides connect Cys-654-Cys-664, Cys-658-Cys-670, and Cys-672-Cys-681. Residues 700 to 720 traverse the membrane as a helical segment; sequence VGPVVAGVLVAILVLAVLMLM. Residues 721-955 are Cytoplasmic-facing; it reads YYCCRQNNKL…AKHSCFLVPA (235 aa). Over residues 753–771 the composition is skewed to polar residues; that stretch reads SQNSGTGHANPTFKLQTPQ. The segment at 753–917 is disordered; the sequence is SQNSGTGHAN…LKVKAGTRGL (165 aa). Composition is skewed to pro residues over residues 787-796 and 833-844; these read SQPPPRPPPD and RPPPSRPIPPAP. The SH3-binding signature appears at 833 to 844; that stretch reads RPPPSRPIPPAP.

Interacts with SH3PXD2A. Requires Zn(2+) as cofactor. Post-translationally, the precursor is cleaved by a furin endopeptidase. Expressed in many normal organ tissues and several cancer cell lines.

The protein localises to the membrane. In terms of biological role, participates in the proteolytic processing of beta-type neuregulin isoforms which are involved in neurogenesis and synaptogenesis, suggesting a regulatory role in glial cell. Also cleaves alpha-2 macroglobulin. May be involved in osteoblast differentiation and/or osteoblast activity in bone. This chain is Disintegrin and metalloproteinase domain-containing protein 19 (ADAM19), found in Homo sapiens (Human).